The following is a 218-amino-acid chain: MASRNYRWELFAASLTLTLALIHLVEANSEGDALYALRRSLTDPDHVLQSWDPTLVNPCTWFHVTCNQDNRVTRVDLGNSNLSGHLAPELGKLEHLQYLELYKNNIQGTIPSELGNLKNLISLDLYNNNLTGIVPTSLGKLKSLVFLRLNDNRLTGPIPRALTAIPSLKVVDVSSNDLCGTIPTNGPFAHIPLQNFENNPRLEGPELLGLASYDTNCT.

A signal peptide spans 1-27 (MASRNYRWELFAASLTLTLALIHLVEA). LRR repeat units lie at residues 94 to 117 (EHLQ…LGNL), 119 to 140 (NLIS…SLGK), 141 to 165 (LKSL…LTAI), and 167 to 190 (SLKV…PFAH).

Interacts with HIR1.

Involved in plant defense response. This chain is Leucine-rich repeat protein 1, found in Arabidopsis thaliana (Mouse-ear cress).